Consider the following 139-residue polypeptide: Large ribosomal subunit protein bL17 (139 aa).

Belongs to the bacterial ribosomal protein bL17 family. As to quaternary structure, part of the 50S ribosomal subunit. Contacts protein L32.

The chain is Large ribosomal subunit protein bL17 from Afipia carboxidovorans (strain ATCC 49405 / DSM 1227 / KCTC 32145 / OM5) (Oligotropha carboxidovorans).